Consider the following 118-residue polypeptide: Ribonuclease P protein component (118 aa).

The protein belongs to the RnpA family. As to quaternary structure, consists of a catalytic RNA component (M1 or rnpB) and a protein subunit.

The catalysed reaction is Endonucleolytic cleavage of RNA, removing 5'-extranucleotides from tRNA precursor.. In terms of biological role, RNaseP catalyzes the removal of the 5'-leader sequence from pre-tRNA to produce the mature 5'-terminus. It can also cleave other RNA substrates such as 4.5S RNA. The protein component plays an auxiliary but essential role in vivo by binding to the 5'-leader sequence and broadening the substrate specificity of the ribozyme. This Mycobacterium sp. (strain KMS) protein is Ribonuclease P protein component.